Here is a 112-residue protein sequence, read N- to C-terminus: Protein FAM32A (112 aa).

The tract at residues Thr-23–Asp-56 is disordered. Residues Lys-45–Asp-56 are compositionally biased toward basic and acidic residues.

It belongs to the FAM32 family.

The protein resides in the nucleus. May induce G2 arrest and apoptosis. May also increase cell sensitivity to apoptotic stimuli. The protein is Protein FAM32A (Fam32a) of Rattus norvegicus (Rat).